The following is a 66-amino-acid chain: Venom peptide CtAPI (66 aa).

5 disulfide bridges follow: C7-C44, C16-C40, C20-C33, C24-C64, and C46-C58. The TIL domain maps to 7 to 64 (CEKDEEFVNCAPRCPQNCRNIRSYQPCLVLTPVCAPGCVCRSGKVKNDRGDCVSITDC).

It belongs to the serine protease inhibitor-like (TIL domain-containing) family. In terms of tissue distribution, expressed by the venom gland.

It is found in the secreted. In terms of biological role, serine protease inhibitor. The protein is Venom peptide CtAPI of Chaerilus tricostatus (Scorpion).